A 342-amino-acid chain; its full sequence is MENRMVTPFDVEDDREQYSLRPTTLKEYIGQKKVKANLDIFIKAAKKRNESLDHVLFYGPPGLGKTTLANIIANEMTGNLKVTSGPAIEKAGDLAAILTSLTDYDVLFIDEIHRLNRSIEEILYPAMEDYALDIVIGKGAAAKSIRLDLPKFTLIGATTRVGLLTSPLRDRFGMLCAMEFYTDEELMEIVVRSAAILNVNICREAAFEIGKRSRGTPRIANRLLKRVRDYCDVKHDGDIDLQGAKAALDLLEVDKEGLDKIDNKILEAIIFNFKGGPVGLETLAYFIGEELDTIEDVYEPYLIQKGFIMRTPRGRVASEKAYNHFGVTKKEEKDNQVSIFNK.

The interval methionine 1–tyrosine 181 is large ATPase domain (RuvB-L). ATP is bound by residues leucine 20, arginine 21, glycine 62, lysine 65, threonine 66, threonine 67, glutamate 128–tyrosine 130, arginine 171, tyrosine 181, and arginine 218. Position 66 (threonine 66) interacts with Mg(2+). The tract at residues threonine 182–glutamate 252 is small ATPAse domain (RuvB-S). The interval lysine 255 to lysine 342 is head domain (RuvB-H). DNA contacts are provided by arginine 310 and arginine 315.

This sequence belongs to the RuvB family. In terms of assembly, homohexamer. Forms an RuvA(8)-RuvB(12)-Holliday junction (HJ) complex. HJ DNA is sandwiched between 2 RuvA tetramers; dsDNA enters through RuvA and exits via RuvB. An RuvB hexamer assembles on each DNA strand where it exits the tetramer. Each RuvB hexamer is contacted by two RuvA subunits (via domain III) on 2 adjacent RuvB subunits; this complex drives branch migration. In the full resolvosome a probable DNA-RuvA(4)-RuvB(12)-RuvC(2) complex forms which resolves the HJ.

It localises to the cytoplasm. The catalysed reaction is ATP + H2O = ADP + phosphate + H(+). Its function is as follows. The RuvA-RuvB-RuvC complex processes Holliday junction (HJ) DNA during genetic recombination and DNA repair, while the RuvA-RuvB complex plays an important role in the rescue of blocked DNA replication forks via replication fork reversal (RFR). RuvA specifically binds to HJ cruciform DNA, conferring on it an open structure. The RuvB hexamer acts as an ATP-dependent pump, pulling dsDNA into and through the RuvAB complex. RuvB forms 2 homohexamers on either side of HJ DNA bound by 1 or 2 RuvA tetramers; 4 subunits per hexamer contact DNA at a time. Coordinated motions by a converter formed by DNA-disengaged RuvB subunits stimulates ATP hydrolysis and nucleotide exchange. Immobilization of the converter enables RuvB to convert the ATP-contained energy into a lever motion, pulling 2 nucleotides of DNA out of the RuvA tetramer per ATP hydrolyzed, thus driving DNA branch migration. The RuvB motors rotate together with the DNA substrate, which together with the progressing nucleotide cycle form the mechanistic basis for DNA recombination by continuous HJ branch migration. Branch migration allows RuvC to scan DNA until it finds its consensus sequence, where it cleaves and resolves cruciform DNA. In Clostridium botulinum (strain ATCC 19397 / Type A), this protein is Holliday junction branch migration complex subunit RuvB.